The following is a 305-amino-acid chain: Uracil-DNA glycosylase (305 aa).

Catalysis depends on Asp148, which acts as the Proton acceptor.

It belongs to the uracil-DNA glycosylase (UDG) superfamily. UNG family.

The protein localises to the host nucleus. The enzyme catalyses Hydrolyzes single-stranded DNA or mismatched double-stranded DNA and polynucleotides, releasing free uracil.. In terms of biological role, excises uracil residues from the DNA which can arise as a result of misincorporation of dUMP residues by DNA polymerase or deamination of cytosines. Therefore may reduce deleterious uracil incorporation into the viral genome, particularly in terminally differentiated cells which lack DNA repair enzymes. This is Uracil-DNA glycosylase from Varicella-zoster virus (strain Dumas) (HHV-3).